Here is a 230-residue protein sequence, read N- to C-terminus: 7-cyano-7-deazaguanine synthase (230 aa).

8–18 (LSGGMDSAVVT) serves as a coordination point for ATP. Zn(2+) is bound by residues Cys-186, Cys-196, Cys-199, and Cys-202.

This sequence belongs to the QueC family. Requires Zn(2+) as cofactor.

The catalysed reaction is 7-carboxy-7-deazaguanine + NH4(+) + ATP = 7-cyano-7-deazaguanine + ADP + phosphate + H2O + H(+). The protein operates within purine metabolism; 7-cyano-7-deazaguanine biosynthesis. In terms of biological role, catalyzes the ATP-dependent conversion of 7-carboxy-7-deazaguanine (CDG) to 7-cyano-7-deazaguanine (preQ(0)). In Xylella fastidiosa (strain 9a5c), this protein is 7-cyano-7-deazaguanine synthase.